We begin with the raw amino-acid sequence, 302 residues long: Urease accessory protein UreD (302 aa).

This sequence belongs to the UreD family. UreD, UreF and UreG form a complex that acts as a GTP-hydrolysis-dependent molecular chaperone, activating the urease apoprotein by helping to assemble the nickel containing metallocenter of UreC. The UreE protein probably delivers the nickel.

Its subcellular location is the cytoplasm. Required for maturation of urease via the functional incorporation of the urease nickel metallocenter. This chain is Urease accessory protein UreD, found in Pseudoalteromonas translucida (strain TAC 125).